The primary structure comprises 152 residues: UPF0225 protein KPK_2103 (152 aa).

Belongs to the UPF0225 family.

The sequence is that of UPF0225 protein KPK_2103 from Klebsiella pneumoniae (strain 342).